Consider the following 334-residue polypeptide: Glyoxylate reductase (334 aa).

NADP(+) contacts are provided by residues 158–161 (FGRI), 180–182 (SRT), and 239–241 (IAR). Catalysis depends on residues Arg241 and Glu270. The active-site Proton donor is the His288. 288–290 (HIG) lines the NADP(+) pocket.

It belongs to the D-isomer specific 2-hydroxyacid dehydrogenase family. GyaR subfamily. As to quaternary structure, homodimer.

The protein resides in the cytoplasm. It carries out the reaction glycolate + NAD(+) = glyoxylate + NADH + H(+). The chain is Glyoxylate reductase from Thermococcus gammatolerans (strain DSM 15229 / JCM 11827 / EJ3).